The following is a 297-amino-acid chain: tRNA pseudouridine synthase B (297 aa).

D44 (nucleophile) is an active-site residue.

The protein belongs to the pseudouridine synthase TruB family. Type 1 subfamily.

The enzyme catalyses uridine(55) in tRNA = pseudouridine(55) in tRNA. Responsible for synthesis of pseudouridine from uracil-55 in the psi GC loop of transfer RNAs. In Corynebacterium aurimucosum (strain ATCC 700975 / DSM 44827 / CIP 107346 / CN-1) (Corynebacterium nigricans), this protein is tRNA pseudouridine synthase B.